Reading from the N-terminus, the 126-residue chain is Small ribosomal subunit protein uS13 (126 aa).

The disordered stretch occupies residues 95 to 126; that stretch reads GLPVRGQRTRTNARTRKGPRKTVAGKKKAPRK.

Belongs to the universal ribosomal protein uS13 family. In terms of assembly, part of the 30S ribosomal subunit. Forms a loose heterodimer with protein S19. Forms two bridges to the 50S subunit in the 70S ribosome.

Located at the top of the head of the 30S subunit, it contacts several helices of the 16S rRNA. In the 70S ribosome it contacts the 23S rRNA (bridge B1a) and protein L5 of the 50S subunit (bridge B1b), connecting the 2 subunits; these bridges are implicated in subunit movement. Contacts the tRNAs in the A and P-sites. This Thermus thermophilus (strain ATCC BAA-163 / DSM 7039 / HB27) protein is Small ribosomal subunit protein uS13 (rpsM).